An 873-amino-acid polypeptide reads, in one-letter code: DNA mismatch repair protein MutS (873 aa).

628–635 (GPNMAGKS) contributes to the ATP binding site.

The protein belongs to the DNA mismatch repair MutS family.

Its function is as follows. This protein is involved in the repair of mismatches in DNA. It is possible that it carries out the mismatch recognition step. This protein has a weak ATPase activity. The chain is DNA mismatch repair protein MutS from Chlorobium chlorochromatii (strain CaD3).